The primary structure comprises 381 residues: CD2 homolog (381 aa).

The N-terminal stretch at 1–16 (MIIKLIFLICFKIVLS) is a signal peptide. At 17–208 (INYWVRYNDT…QNYFLENIHT (192 aa)) the chain is on the extracellular side. 12 N-linked (GlcNAc...) asparagine; by host glycosylation sites follow: Asn24, Asn73, Asn77, Asn85, Asn91, Asn104, Asn121, Asn133, Asn144, Asn176, Asn183, and Asn189. 2 cysteine pairs are disulfide-bonded: Cys122-Cys190 and Cys129-Cys173. A helical transmembrane segment spans residues 209 to 229 (LFYMIIFIVSGITISIFISII). At 230–381 (TFLSLRKRKK…ISLIHVDRII (152 aa)) the chain is on the cytoplasmic side. The segment at 243 to 278 (EIESPPPESNEEEQCQHDDTTSIHEPSPREPLLPKP) is disordered. The span at 256 to 270 (QCQHDDTTSIHEPSP) shows a compositional bias: basic and acidic residues. 7 repeat units span residues 305 to 310 (KPCPPP), 311 to 316 (KPCPPP), 317 to 322 (KPCPPP), 323 to 328 (KPCPPP), 329 to 334 (KPCPPP), 335 to 340 (KPCPPP), and 341 to 346 (KPCPPP). The 7 X 6 AA tandem repeats of K-[LP]-C-[PRS]-[PS]-[PS] stretch occupies residues 305–334 (KPCPPPKPCPPPKPCPPPKPCPPPKPCPPP). The segment at 341-362 (KPCPPPESYSPPKPLPSIPLLP) is disordered.

Belongs to the asfivirus CD2 homolog protein family. Both glycosylated and nonglycosylated forms interact (via C-terminus) with the host AP-1 complex. In terms of processing, cleaved into two fragments of 63 kDa and 26 kDa containing respectively the glycosylated N-terminus and the nonglycosylated C-terminus. A full-length 89-kDa glycosylated form also exists.

Its subcellular location is the host membrane. It localises to the virion membrane. It is found in the host Golgi apparatus. Its function is as follows. May play an immunosuppressive role by inhibiting lymphocyte proliferation and subsequently facilitating viral replication and generalization of infection. Responsible for viral hemadsorption, which may help viral spread. Increases virus replication in the tick vector at the step of virus uptake or replication in the tick gut. May play a role in the host Golgi reorganization to yield viral factories. May play a role in host cell penetration. The polypeptide is CD2 homolog (African swine fever virus (isolate Warthog/Namibia/Wart80/1980) (ASFV)).